The following is a 670-amino-acid chain: Transcription factor 4 (670 aa).

Residues 1-83 (MHHQQRMAAL…GTPYDHMTSR (83 aa)) are essential for MYOD1 inhibition. 6 disordered regions span residues 24–244 (AMFS…LGNS), 262–320 (LSYP…SQTG), 335–378 (HTNN…EGPL), 406–426 (PSTA…PSHN), 465–573 (SLLP…MANN), and 637–670 (KRRE…MGQM). Polar residues predominate over residues 29-49 (PVSSGKNGPTSLASGHFTGSN). Phosphoserine is present on residues Ser66, Ser87, and Ser92. 4 stretches are compositionally biased toward polar residues: residues 107-125 (GSYS…QQSL), 136-154 (GTLS…SSNN), 205-215 (PAASTFPSSFF), and 265-305 (PSHS…TDSI). Residues 336 to 347 (TNNSFSSNPSTP) are compositionally biased toward low complexity. Residues 364–373 (NGGQASSSPN) are compositionally biased toward polar residues. Ser371 carries the post-translational modification Phosphoserine. A leucine-zipper region spans residues 378-399 (LHSLQSRIEDRLERLDDAIHVL). 2 stretches are compositionally biased toward low complexity: residues 466–479 (LLPN…LPVQ) and 502–511 (GQSVSSGSSE). Residue Ser514 is modified to Phosphoserine. Basic and acidic residues-rich tracts occupy residues 526-542 (KSSE…DIKS) and 558-573 (PEQK…MANN). One can recognise a bHLH domain in the interval 567–620 (ERRMANNARERLRVRDINEAFKELGRMVQLHLKSDKPQTKLLILHQAVAVILSL). A class A specific domain region spans residues 622–645 (QQVRERNLNPKAACLKRREEEKVS).

In terms of assembly, efficient DNA binding requires dimerization with another bHLH protein. Isoform 2 seems to form inactive heterodimers with MYOD1. Interacts with HIVEP2. Interacts with NEUROD2. Interacts with AGBL1. Interacts with BHLHA9. As to expression, expressed in the cerebral cortex, Purkinje and granule cell layers of the cerebellum, olfactory neuroepithelium, pyramidal cells of hippocampal layers CA1-CA4, and in the granular cells of the dentate gyrus.

It localises to the nucleus. Transcription factor that binds to the immunoglobulin enhancer Mu-E5/KE5-motif. Involved in the initiation of neuronal differentiation. Activates transcription by binding to the E box (5'-CANNTG-3'). Isoform 2 inhibits MYOD1 activation of the cardiac alpha-actin promoter. Binds to the E-box present in the somatostatin receptor 2 initiator element (SSTR2-INR) to activate transcription. May have a regulatory function in developmental processes as well as during neuronal plasticity. The chain is Transcription factor 4 (Tcf4) from Mus musculus (Mouse).